The primary structure comprises 518 residues: ETHYLENE INSENSITIVE 3-like 2 protein (518 aa).

The stretch at 37-73 (DDLSSDEEMEIEELEKKIWRDKQRLKRLKEMAKNGLG) forms a coiled coil. Residues 450-518 (FNHPNDLYRP…GQELPTSWIQ (69 aa)) are disordered. 2 stretches are compositionally biased toward polar residues: residues 475-484 (PSPSTLNQNL) and 500-518 (GTENNLHNQGQELPTSWIQ).

This sequence belongs to the EIN3 family. Acts as a homodimer to bind the primary ethylene response element.

Its subcellular location is the nucleus. In terms of biological role, probable transcription factor acting as a positive regulator in the ethylene response pathway. Could bind the primary ethylene response element present in the ETHYLENE-RESPONSE-FACTOR1 promoter. This chain is ETHYLENE INSENSITIVE 3-like 2 protein (EIL2), found in Arabidopsis thaliana (Mouse-ear cress).